A 248-amino-acid polypeptide reads, in one-letter code: Probable phosphatase VF_A0065 (248 aa).

The Zn(2+) site is built by H8, H10, H16, H41, E74, H102, H132, D194, and H196.

This sequence belongs to the PHP family. Zn(2+) is required as a cofactor.

The polypeptide is Probable phosphatase VF_A0065 (Aliivibrio fischeri (strain ATCC 700601 / ES114) (Vibrio fischeri)).